Here is a 606-residue protein sequence, read N- to C-terminus: ATP-dependent rRNA helicase spb4 (606 aa).

Positions 1–29 match the Q motif motif; sequence MSFQSINIDKWLKNAVAAQGFKKMTPVQA. Residues 32-213 form the Helicase ATP-binding domain; sequence IPLFLKNKDL…KIAGLRNSVR (182 aa). 45 to 52 lines the ATP pocket; that stretch reads AVTGSGKT. The short motif at 161–164 is the DEAD box element; the sequence is DEAD. A Helicase C-terminal domain is found at 246–400; it reads CMIHLLCTIE…ALDLSRLKVL (155 aa). The tract at residues 521–574 is disordered; it reads KQKEVKEKRNTRREKRKSKKEFLKAQKNEASNNLKQEIVSKAGAQETENDDLID. The stretch at 521 to 601 forms a coiled coil; the sequence is KQKEVKEKRN…KSKKRKNQAS (81 aa). Residues 529–539 show a composition bias toward basic residues; that stretch reads RNTRREKRKSK.

The protein belongs to the DEAD box helicase family. DDX55/SPB4 subfamily. In terms of assembly, component of pre-60S ribosomal complexes.

It localises to the nucleus. It is found in the nucleolus. The catalysed reaction is ATP + H2O = ADP + phosphate + H(+). In terms of biological role, ATP-binding RNA helicase involved in the biogenesis of 60S ribosomal subunits. Binds 90S pre-ribosomal particles and dissociates from pre-60S ribosomal particles after processing of 27SB pre-rRNA. Required for the normal formation of 18S rRNA through the processing of pre-rRNAs at sites A0, A1 and A2, and the normal formation of 25S and 5.8S rRNAs through the processing of pre-rRNAs at sites C1 and C2. This Schizosaccharomyces pombe (strain 972 / ATCC 24843) (Fission yeast) protein is ATP-dependent rRNA helicase spb4.